Reading from the N-terminus, the 424-residue chain is CinA-like protein (424 aa).

Belongs to the CinA family.

This Shewanella frigidimarina (strain NCIMB 400) protein is CinA-like protein.